A 514-amino-acid chain; its full sequence is MATFVDRVTVHLRAGNGGNGCVSVRREKFKPLAGPDGGNGGNGGDIVLVADPQVTTLLGYHRRPHRSSGNGGFGMGDHRSGHTGEDLELPVPVGTVVKSSEGAELADLTEPGMRIVAAPGGIGGLGNAALSNPKRKAPGFALLGTPGWEGDILLELKTVADIALVGYPSAGKSSLIAALSAAKPKIADYPFTTLHPNLGVVQVGDVRYTVADVPGLIEGASEGRGLGFEFLRHVERCSALLHVLDCATLEPGRDPLSDLDVILAELAAYPVPEGQLPLLERPQLIALNKIDVPDARELADFLRPDLEARGYRVFEISTVSHEGLRPLSFALAELVERARKEQAVLDETRPRIIVRPKTVDDSGFVVKVEGGSEGPVYRVLGAKPERWVAQTDFQNDEAIGYLAARLAKLGVEDQLVRVGAVAGSTVVIGRENGVVFDWEPTLTSAAELISSPRGTDARIGVNARPTRAQRREDYFDRMDAKAEARAELLREREAGLWKDDDAAVQGGSEETGRE.

An Obg domain is found at 2–159 (ATFVDRVTVH…GDILLELKTV (158 aa)). Positions 62–88 (RRPHRSSGNGGFGMGDHRSGHTGEDLE) are disordered. Over residues 76–85 (GDHRSGHTGE) the composition is skewed to basic and acidic residues. The 177-residue stretch at 160 to 336 (ADIALVGYPS…LSFALAELVE (177 aa)) folds into the OBG-type G domain. GTP is bound by residues 166–173 (GYPSAGKS), 191–195 (FTTLH), 212–215 (DVPG), 288–291 (NKID), and 317–319 (STV). Mg(2+) contacts are provided by Ser173 and Thr193. An OCT domain is found at 356–440 (PKTVDDSGFV…ENGVVFDWEP (85 aa)).

Belongs to the TRAFAC class OBG-HflX-like GTPase superfamily. OBG GTPase family. In terms of assembly, monomer. Requires Mg(2+) as cofactor.

Its subcellular location is the cytoplasm. Functionally, an essential GTPase which binds GTP, GDP and possibly (p)ppGpp with moderate affinity, with high nucleotide exchange rates and a fairly low GTP hydrolysis rate. Plays a role in control of the cell cycle, stress response, ribosome biogenesis and in those bacteria that undergo differentiation, in morphogenesis control. This is GTPase Obg from Leifsonia xyli subsp. xyli (strain CTCB07).